The sequence spans 404 residues: Triose phosphate/phosphate translocator, chloroplastic (404 aa).

A chloroplast-targeting transit peptide spans 1-74 (MESRVLSRTT…GPVCSRREKT (74 aa)). The Chloroplast intermembrane portion of the chain corresponds to 75 to 98 (AVQPCRAASGSSGEAKTGFLEKYP). A helical membrane pass occupies residues 99 to 119 (ALVTGSFFFMWYFLNVIFNIL). Residues 120–131 (NKKIYNYFPYPY) lie on the Lumenal side of the membrane. The helical transmembrane segment at 132–152 (FVSVIHLFVGVVYCLASWSVG) threads the bilayer. Residues 153–209 (LPKRAPMDSKLLKLLIPVAVCHAIGHVTSNVSFAAVAVSFTHTIKALEPFFNAAASQ) are Chloroplast intermembrane-facing. The chain crosses the membrane as a helical span at residues 210–230 (FVLGQSIPITLWLSLAPVVIG). The Lumenal segment spans residues 231–274 (VSMASLTELSFNWLGFISAMISNVSFTYRSLYSKKAMTDMDSTN). The chain crosses the membrane as a helical span at residues 275 to 294 (IYAYISIIALFVCLPPAIIV). Residues 295–372 (EGPQLMKHGF…IAFGNKISTQ (78 aa)) lie on the Chloroplast intermembrane side of the membrane. The helical transmembrane segment at 373–393 (TAIGTSIAIAGVALYSLIKAK) threads the bilayer. Over 394–404 (MEEEKRQMKST) the chain is Lumenal.

The protein belongs to the TPT transporter family. TPT (TC 2.A.7.9) subfamily. The N-terminus is blocked.

It is found in the plastid. The protein localises to the chloroplast membrane. Mediates the export of fixed carbons from the chloroplasts into the cytosol in the form of triose phosphates. In Spinacia oleracea (Spinach), this protein is Triose phosphate/phosphate translocator, chloroplastic.